The chain runs to 249 residues: SRR1-like protein (249 aa).

The segment at 1 to 40 (MAAAALEPWSAVAPRRRKRAAGRRPRPGEGPRAEPEADGE) is disordered. Residues 14 to 25 (PRRRKRAAGRRP) are compositionally biased toward basic residues. The span at 26–40 (RPGEGPRAEPEADGE) shows a compositional bias: basic and acidic residues.

The protein belongs to the SRR1 family.

The protein resides in the cytoplasm. Its function is as follows. Plays a role in the regulation of heme biosynthesis and in the regulation of the expression of core clock genes. This is SRR1-like protein (Srrd) from Mus musculus (Mouse).